The chain runs to 342 residues: L-threonine 3-dehydrogenase (342 aa).

Position 38 (cysteine 38) interacts with Zn(2+). Active-site charge relay system residues include threonine 40 and histidine 43. The Zn(2+) site is built by histidine 63, glutamate 64, cysteine 93, cysteine 96, cysteine 99, and cysteine 107. NAD(+) contacts are provided by residues isoleucine 175, aspartate 195, arginine 200, 262-264, and 286-287; these read LGI and IY.

Belongs to the zinc-containing alcohol dehydrogenase family. As to quaternary structure, homotetramer. Zn(2+) is required as a cofactor.

It localises to the cytoplasm. The catalysed reaction is L-threonine + NAD(+) = (2S)-2-amino-3-oxobutanoate + NADH + H(+). The protein operates within amino-acid degradation; L-threonine degradation via oxydo-reductase pathway; glycine from L-threonine: step 1/2. In terms of biological role, catalyzes the NAD(+)-dependent oxidation of L-threonine to 2-amino-3-ketobutyrate. The protein is L-threonine 3-dehydrogenase of Burkholderia cenocepacia (strain HI2424).